A 155-amino-acid chain; its full sequence is Ribosomal RNA large subunit methyltransferase H (155 aa).

Residues leucine 72, glycine 103, and 122–127 (LSPLTL) each bind S-adenosyl-L-methionine.

It belongs to the RNA methyltransferase RlmH family. In terms of assembly, homodimer.

It localises to the cytoplasm. It carries out the reaction pseudouridine(1915) in 23S rRNA + S-adenosyl-L-methionine = N(3)-methylpseudouridine(1915) in 23S rRNA + S-adenosyl-L-homocysteine + H(+). In terms of biological role, specifically methylates the pseudouridine at position 1915 (m3Psi1915) in 23S rRNA. The polypeptide is Ribosomal RNA large subunit methyltransferase H (Actinobacillus pleuropneumoniae serotype 5b (strain L20)).